Reading from the N-terminus, the 136-residue chain is Peptide methionine sulfoxide reductase MsrB (136 aa).

Positions 13–135 (ENDWRSKLTP…NSASLDFKDK (123 aa)) constitute a MsrB domain. 4 residues coordinate Zn(2+): Cys-52, Cys-55, Cys-101, and Cys-104. Residue Cys-124 is the Nucleophile of the active site.

The protein belongs to the MsrB Met sulfoxide reductase family. It depends on Zn(2+) as a cofactor.

The enzyme catalyses L-methionyl-[protein] + [thioredoxin]-disulfide + H2O = L-methionyl-(R)-S-oxide-[protein] + [thioredoxin]-dithiol. The polypeptide is Peptide methionine sulfoxide reductase MsrB (Synechococcus sp. (strain RCC307)).